A 180-amino-acid polypeptide reads, in one-letter code: Ribosome maturation factor RimM (180 aa).

A PRC barrel domain is found at 108-180; it reads PDEYYWVDLE…LIVVDWDPDF (73 aa).

This sequence belongs to the RimM family. Binds ribosomal protein uS19.

The protein resides in the cytoplasm. An accessory protein needed during the final step in the assembly of 30S ribosomal subunit, possibly for assembly of the head region. Essential for efficient processing of 16S rRNA. May be needed both before and after RbfA during the maturation of 16S rRNA. It has affinity for free ribosomal 30S subunits but not for 70S ribosomes. This is Ribosome maturation factor RimM from Xanthomonas euvesicatoria pv. vesicatoria (strain 85-10) (Xanthomonas campestris pv. vesicatoria).